A 376-amino-acid polypeptide reads, in one-letter code: Chaperone protein DnaJ (376 aa).

Residues 5-70 form the J domain; the sequence is DYYEVLGVGR…DKKAAYDQFG (66 aa). The CR-type zinc finger occupies 132–210; it reads GLTKELRIPT…CHGDGRVEKS (79 aa). Cysteine 145, cysteine 148, cysteine 162, cysteine 165, cysteine 184, cysteine 187, cysteine 198, and cysteine 201 together coordinate Zn(2+). CXXCXGXG motif repeat units lie at residues 145-152, 162-169, 184-191, and 198-205; these read CDLCDGSG, CTTCHGQG, CPTCHGRG, and CSKCHGDG.

The protein belongs to the DnaJ family. In terms of assembly, homodimer. Zn(2+) serves as cofactor.

The protein localises to the cytoplasm. Participates actively in the response to hyperosmotic and heat shock by preventing the aggregation of stress-denatured proteins and by disaggregating proteins, also in an autonomous, DnaK-independent fashion. Unfolded proteins bind initially to DnaJ; upon interaction with the DnaJ-bound protein, DnaK hydrolyzes its bound ATP, resulting in the formation of a stable complex. GrpE releases ADP from DnaK; ATP binding to DnaK triggers the release of the substrate protein, thus completing the reaction cycle. Several rounds of ATP-dependent interactions between DnaJ, DnaK and GrpE are required for fully efficient folding. Also involved, together with DnaK and GrpE, in the DNA replication of plasmids through activation of initiation proteins. The polypeptide is Chaperone protein DnaJ (Shewanella sp. (strain W3-18-1)).